The following is a 588-amino-acid chain: Cyclin-dependent kinase 8 (588 aa).

Residues 26–348 (FENSKEIGRG…CEEAMNDIYF (323 aa)) form the Protein kinase domain. Residues 32 to 40 (IGRGTYGLV) and Lys60 each bind ATP. The active-site Proton acceptor is Asp158. 3 disordered regions span residues 376–426 (MTVA…GAHP), 510–529 (PGPSGYYPQRPGQPTGAVPG), and 546–588 (MRAP…QYHR). A compositionally biased stretch (low complexity) spans 382–426 (QAQQQHQQQQVQMQQQPQMGQQQMMGQPQMVQPQMGQPPMGGAHP). The segment covering 557 to 588 (MPGRGMAPPQMGQQQPGPNQQQQQQWQQQYHR) has biased composition (low complexity).

This sequence belongs to the protein kinase superfamily. CMGC Ser/Thr protein kinase family. CDC2/CDKX subfamily. Component of the Mediator complex. It depends on Mg(2+) as a cofactor.

The protein localises to the nucleus. It catalyses the reaction L-seryl-[protein] + ATP = O-phospho-L-seryl-[protein] + ADP + H(+). It carries out the reaction L-threonyl-[protein] + ATP = O-phospho-L-threonyl-[protein] + ADP + H(+). The enzyme catalyses [DNA-directed RNA polymerase] + ATP = phospho-[DNA-directed RNA polymerase] + ADP + H(+). In terms of biological role, component of the Mediator complex, a coactivator involved in regulated gene transcription of nearly all RNA polymerase II-dependent genes. Mediator functions as a bridge to convey information from gene-specific regulatory proteins to the basal RNA polymerase II transcription machinery. Mediator is recruited to promoters by direct interactions with regulatory proteins and serves as a scaffold for the assembly of a functional pre-initiation complex with RNA polymerase II and the general transcription factors. Phosphorylates the CTD (C-terminal domain) of the large subunit of RNA polymerase II (RNAp II), which may inhibit the formation of a transcription initiation complex. The chain is Cyclin-dependent kinase 8 (cdk-8) from Caenorhabditis elegans.